The chain runs to 249 residues: UPF0309 protein GTNG_1302 (249 aa).

In terms of domain architecture, SIS spans 31 to 214 (VSKAVQNGGI…ALMAENGVEP (184 aa)).

This sequence belongs to the UPF0309 family.

This Geobacillus thermodenitrificans (strain NG80-2) protein is UPF0309 protein GTNG_1302.